The primary structure comprises 82 residues: Small ribosomal subunit protein eS27B (82 aa).

The C4-type zinc-finger motif lies at cysteine 37 to cysteine 59.

It belongs to the eukaryotic ribosomal protein eS27 family. As to quaternary structure, component of the small ribosomal subunit (SSU). Mature yeast ribosomes consist of a small (40S) and a large (60S) subunit. The 40S small subunit contains 1 molecule of ribosomal RNA (18S rRNA) and 33 different proteins (encoded by 57 genes). The large 60S subunit contains 3 rRNA molecules (25S, 5.8S and 5S rRNA) and 46 different proteins (encoded by 81 genes). Requires Zn(2+) as cofactor. Post-translationally, the N-terminus is not modified.

The protein resides in the cytoplasm. Functionally, component of the ribosome, a large ribonucleoprotein complex responsible for the synthesis of proteins in the cell. The small ribosomal subunit (SSU) binds messenger RNAs (mRNAs) and translates the encoded message by selecting cognate aminoacyl-transfer RNA (tRNA) molecules. The large subunit (LSU) contains the ribosomal catalytic site termed the peptidyl transferase center (PTC), which catalyzes the formation of peptide bonds, thereby polymerizing the amino acids delivered by tRNAs into a polypeptide chain. The nascent polypeptides leave the ribosome through a tunnel in the LSU and interact with protein factors that function in enzymatic processing, targeting, and the membrane insertion of nascent chains at the exit of the ribosomal tunnel. In Saccharomyces cerevisiae (strain ATCC 204508 / S288c) (Baker's yeast), this protein is Small ribosomal subunit protein eS27B.